Here is a 293-residue protein sequence, read N- to C-terminus: Phosphatidylcholine-sterol acyltransferase (293 aa).

Asn-26 carries an N-linked (GlcNAc...) asparagine glycan. Residue Ser-123 is the Nucleophile of the active site. The N-linked (GlcNAc...) asparagine glycan is linked to Asn-179. Cys-220 and Cys-263 are disulfide-bonded. Catalysis depends on Asp-252, which acts as the Charge relay system. N-linked (GlcNAc...) asparagine glycosylation is present at Asn-280. Residue His-284 is the Charge relay system of the active site.

This sequence belongs to the AB hydrolase superfamily. Lipase family.

Its subcellular location is the secreted. It carries out the reaction a sterol + a 1,2-diacyl-sn-glycero-3-phosphocholine = a sterol ester + a 1-acyl-sn-glycero-3-phosphocholine. Its activity is regulated as follows. APOA1 is the most potent activator in plasma. Also activated by APOE, APOC1 and APOA4. Functionally, central enzyme in the extracellular metabolism of plasma lipoproteins. Synthesized mainly in the liver and secreted into plasma where it converts cholesterol and phosphatidylcholines (lecithins) to cholesteryl esters and lysophosphatidylcholines on the surface of high and low density lipoproteins (HDLs and LDLs). The cholesterol ester is then transported back to the liver. Has a preference for plasma 16:0-18:2 or 18:O-18:2 phosphatidylcholines. Also produced in the brain by primary astrocytes, and esterifies free cholesterol on nascent APOE-containing lipoproteins secreted from glia and influences cerebral spinal fluid (CSF) APOE- and APOA1 levels. Together with APOE and the cholesterol transporter ABCA1, plays a key role in the maturation of glial-derived, nascent lipoproteins. Required for remodeling high-density lipoprotein particles into their spherical forms. This chain is Phosphatidylcholine-sterol acyltransferase (LCAT), found in Gerbilliscus gambianus (Gambian gerbil).